Consider the following 211-residue polypeptide: FMN-dependent NADH:quinone oxidoreductase (211 aa).

FMN is bound by residues Ser-10 and 16–18; that span reads STS.

This sequence belongs to the azoreductase type 1 family. In terms of assembly, homodimer. It depends on FMN as a cofactor.

It carries out the reaction 2 a quinone + NADH + H(+) = 2 a 1,4-benzosemiquinone + NAD(+). The catalysed reaction is N,N-dimethyl-1,4-phenylenediamine + anthranilate + 2 NAD(+) = 2-(4-dimethylaminophenyl)diazenylbenzoate + 2 NADH + 2 H(+). Its function is as follows. Quinone reductase that provides resistance to thiol-specific stress caused by electrophilic quinones. Also exhibits azoreductase activity. Catalyzes the reductive cleavage of the azo bond in aromatic azo compounds to the corresponding amines. This is FMN-dependent NADH:quinone oxidoreductase from Frankia casuarinae (strain DSM 45818 / CECT 9043 / HFP020203 / CcI3).